The sequence spans 483 residues: Zinc metalloproteinase/disintegrin (483 aa).

The N-terminal stretch at 1-20 (MIQVLLVTLCLAAFPYQGSS) is a signal peptide. The propeptide occupies 21–190 (IILESGNVND…KKASQLNLTP (170 aa)). One can recognise a Peptidase M12B domain in the interval 198–394 (RYIELVVVAD…HNPQCMLNEP (197 aa)). Ca(2+) contacts are provided by Glu201 and Asp285. Intrachain disulfides connect Cys309-Cys389, Cys349-Cys373, and Cys351-Cys356. His334 contacts Zn(2+). The active site involves Glu335. Residues His338 and His344 each contribute to the Zn(2+) site. Ca(2+)-binding residues include Cys389 and Asn392. Positions 395–418 (LRTDIVSTPVSGNELLETGEESDF) are excised as a propeptide. A Disintegrin domain is found at 402 to 483 (TPVSGNELLE…AGCPRNPFHA (82 aa)). Intrachain disulfides connect Cys425–Cys448, Cys439–Cys445, Cys444–Cys469, and Cys457–Cys476. Residues 461 to 463 (RGD) carry the Cell attachment site motif.

It belongs to the venom metalloproteinase (M12B) family. P-II subfamily. P-IId sub-subfamily. As to quaternary structure, homodimer; disulfide-linked (disintegrin). Zn(2+) is required as a cofactor. As to expression, expressed by the venom gland.

It localises to the secreted. Its function is as follows. Impairs hemostasis in the envenomed animal. This protein has not been identified in the venom. In terms of biological role, inhibits ADP-induced platelet aggregation. Binds and inhibits integrins GPIIb/GPIIIa (ITGA2B/ITGB3), alpha-5/beta-1 (ITGA5/ITGB1), alpha-V/beta-3 (ITGAV/ITGB3), and alpha-V/beta-5 (ITGAV/ITGB5). It blocks cancer cell adhesion (tested on human breast cancer cell line MDA-MB-435) to fibronectin and vitronectin and thus prevents invasion of cancer cells. The protein is Zinc metalloproteinase/disintegrin of Agkistrodon contortrix contortrix (Southern copperhead).